The following is a 1358-amino-acid chain: DNA-directed RNA polymerase subunit beta (1358 aa).

The span at 1033-1051 shows a compositional bias: basic and acidic residues; the sequence is QGLEDRKKEHEARFDDKKG. The segment at 1033-1053 is disordered; sequence QGLEDRKKEHEARFDDKKGKL.

It belongs to the RNA polymerase beta chain family. As to quaternary structure, the RNAP catalytic core consists of 2 alpha, 1 beta, 1 beta' and 1 omega subunit. When a sigma factor is associated with the core the holoenzyme is formed, which can initiate transcription.

It carries out the reaction RNA(n) + a ribonucleoside 5'-triphosphate = RNA(n+1) + diphosphate. In terms of biological role, DNA-dependent RNA polymerase catalyzes the transcription of DNA into RNA using the four ribonucleoside triphosphates as substrates. In Marinobacter nauticus (strain ATCC 700491 / DSM 11845 / VT8) (Marinobacter aquaeolei), this protein is DNA-directed RNA polymerase subunit beta.